The following is a 131-amino-acid chain: Fumarate reductase subunit C (131 aa).

Transmembrane regions (helical) follow at residues 30–50, 63–83, and 109–129; these read EGTA…LFAL, FLQN…ALLH, and IIKS…FVAL.

This sequence belongs to the FrdC family. In terms of assembly, part of an enzyme complex containing four subunits: a flavoprotein (FrdA), an iron-sulfur protein (FrdB), and two hydrophobic anchor proteins (FrdC and FrdD).

It localises to the cell inner membrane. Two distinct, membrane-bound, FAD-containing enzymes are responsible for the catalysis of fumarate and succinate interconversion; fumarate reductase is used in anaerobic growth, and succinate dehydrogenase is used in aerobic growth. Anchors the catalytic components of the fumarate reductase complex to the cell inner membrane, binds quinones. This is Fumarate reductase subunit C from Escherichia coli O17:K52:H18 (strain UMN026 / ExPEC).